The primary structure comprises 223 residues: UPF0441 protein YgiB (223 aa).

Low complexity predominate over residues 178-195 (TVPKTAMAPKPATTTTVT). Positions 178 to 223 (TVPKTAMAPKPATTTTVTRGGFGESVAKQSTMQRSAAGTSTRSMGG) are disordered. Polar residues predominate over residues 204 to 223 (AKQSTMQRSAAGTSTRSMGG).

The protein belongs to the UPF0441 family.

This is UPF0441 protein YgiB from Salmonella heidelberg (strain SL476).